A 144-amino-acid polypeptide reads, in one-letter code: Maximins 3/H5 (144 aa).

An N-terminal signal peptide occupies residues 1–18 (MNFKYIFAVSFLIASAYA). 2 propeptides span residues 19-43 (RSVQNDEQSLSQRDVLEEESLREIR) and 74-123 (TAEE…KEKR). L143 is subject to Leucine amide.

It belongs to the bombinin family. In terms of tissue distribution, expressed by the skin glands.

It localises to the secreted. Maximin-3 shows antibacterial activity against both Gram-positive and Gram-negative bacteria. It also shows antimicrobial activity against the fungus C.albicans, but not against A.flavus nor P.uticale. It has little hemolytic activity. It possess a significant cytotoxicity against tumor cell lines. It possess a significant anti-HIV activity. It shows high spermicidal activity. Its function is as follows. Maximin-H5 shows antibacterial activity only against the Gram-positive bacteria S.aureus. The other bacterial and fungal strains tested were resistant to it. The presence of metal ions, like Zn(2+) and Mg(2+), did not increase its antimicrobial potency. Does not show hemolytic activity (in a concentration up to 80 uM). In Bombina maxima (Giant fire-bellied toad), this protein is Maximins 3/H5.